The primary structure comprises 232 residues: Ribonuclease 3 (232 aa).

The region spanning 7–136 is the RNase III domain; sequence AALLEDTIDY…LLGAVFCDGG (130 aa). Glutamate 49 serves as a coordination point for Mg(2+). Aspartate 53 is an active-site residue. Mg(2+)-binding residues include asparagine 122 and glutamate 125. Residue glutamate 125 is part of the active site. The region spanning 163–232 is the DRBM domain; that stretch reads DYKTRLQERL…AKQALEYLEE (70 aa).

The protein belongs to the ribonuclease III family. In terms of assembly, homodimer. Requires Mg(2+) as cofactor.

The protein localises to the cytoplasm. The enzyme catalyses Endonucleolytic cleavage to 5'-phosphomonoester.. Its function is as follows. Digests double-stranded RNA. Involved in the processing of primary rRNA transcript to yield the immediate precursors to the large and small rRNAs (23S and 16S). Processes some mRNAs, and tRNAs when they are encoded in the rRNA operon. Processes pre-crRNA and tracrRNA of type II CRISPR loci if present in the organism. The sequence is that of Ribonuclease 3 from Syntrophotalea carbinolica (strain DSM 2380 / NBRC 103641 / GraBd1) (Pelobacter carbinolicus).